Reading from the N-terminus, the 422-residue chain is Glucose-1-phosphate adenylyltransferase (422 aa).

Residues Y109, G175, 190 to 191, and S208 contribute to the alpha-D-glucose 1-phosphate site; that span reads EK.

It belongs to the bacterial/plant glucose-1-phosphate adenylyltransferase family. In terms of assembly, homotetramer.

It carries out the reaction alpha-D-glucose 1-phosphate + ATP + H(+) = ADP-alpha-D-glucose + diphosphate. It participates in glycan biosynthesis; glycogen biosynthesis. Involved in the biosynthesis of ADP-glucose, a building block required for the elongation reactions to produce glycogen. Catalyzes the reaction between ATP and alpha-D-glucose 1-phosphate (G1P) to produce pyrophosphate and ADP-Glc. The protein is Glucose-1-phosphate adenylyltransferase of Shewanella amazonensis (strain ATCC BAA-1098 / SB2B).